The chain runs to 106 residues: Large ribosomal subunit protein eL42 (106 aa).

The interval 36–56 is disordered; that stretch reads FAQGKRRYDRKQSGYGGQTKP.

It belongs to the eukaryotic ribosomal protein eL42 family.

In Phaffia rhodozyma (Yeast), this protein is Large ribosomal subunit protein eL42 (RPL44).